The following is a 109-amino-acid chain: RNA-binding protein Hfq (109 aa).

One can recognise a Sm domain in the interval 9–68 (DPFLNALRKEKVSVSVYLVNGIKLQGQVEAFDQFCIVLRNTVNQMVYKHAISTIVPAKSV). The interval 77-109 (PYHQNSNDEQDENVDDIHSDDLEIQENEGNIHE) is disordered.

This sequence belongs to the Hfq family. Homohexamer.

RNA chaperone that binds small regulatory RNA (sRNAs) and mRNAs to facilitate mRNA translational regulation in response to envelope stress, environmental stress and changes in metabolite concentrations. Also binds with high specificity to tRNAs. This chain is RNA-binding protein Hfq, found in Francisella tularensis subsp. tularensis (strain FSC 198).